Consider the following 35-residue polypeptide: RWKIFKKIEKVGQNIRDGIVKAGPAVAVVGQAATI.

Position 35 is an isoleucine amide (I35).

The protein belongs to the cecropin family.

The protein resides in the secreted. Its function is as follows. Cecropins have lytic and antibacterial activity against several Gram-positive and Gram-negative bacteria. The chain is Cecropin from Bombyx mori (Silk moth).